Reading from the N-terminus, the 860-residue chain is MTAQHQATGTAPGANLSAHTPMMQQYLTLKAENPEILLFYRMGDFYELFYDDARKASQLLDISLTKRGQSAGSPIPMAGVPYHAIEGYLAKLVQLGESAAICEQVGDPATSKGPVERKVIRIITPGTVSDEALLSERQDNLIAAVYHDGRRFGYGTMDIGSGRFFINQFEKEETLLAELQRTNPAELLYPESFTFLHHVEGRRGLRRRPEWEFELGTARKLLCQQFGTQDLVGFGVEQSETALCAAGCLMQYVKDTQRTALPHIRSVRLEQPDHAVIMDAATRRNLELTQNLAGGHDNTLSAVLDCTATPMGSRLLKRWIHQPIRDQVILKGRQSTIKELIEQNLYDELGGLLRQVGDVERVLARLALRSARPRDLTRLRQAFAQLPELQRLLAESEHEAVQQLRERASTFPELLDLLERAVMEVPPVLIRDGGVIRDGFNQELDELRDLANGATASLARIEERERLLTGINTLKVGYNKVHGFYIEVSRANSHLVPAHYIRRQTLKNNERYIIDELKKYEDKVLTAQAQALALEKRLYEELLDALLPHLGDLQESAAALAELDVLANLAERAETLDYRCPTLIDEDQILIEAGRHPVVEQVMTDPFIANPINLQRSRRMLIITGPNMGGKSTYMRQTALIVLLAHIGAFVPADSARIGPIDRIFTRIGASDDLASGRSTFMVEMTETANILNNATARSLVLMDEIGRGTSTYDGLSLAWACAEQLASKIGAYTLFATHYFELTRLPELMEGLANVHLDAVEHGDTIAFMHAVQEGAASRSYGLQVAALAGVPKSVIQQARHKLHELESATPVAAGESRPAPVAMAPQSHPVVDELEAVRPDELTPRQALDLLYRLKQML.

Residue glycine 625 to serine 632 coordinates ATP.

The protein belongs to the DNA mismatch repair MutS family.

In terms of biological role, this protein is involved in the repair of mismatches in DNA. It is possible that it carries out the mismatch recognition step. This protein has a weak ATPase activity. The protein is DNA mismatch repair protein MutS of Aeromonas hydrophila subsp. hydrophila (strain ATCC 7966 / DSM 30187 / BCRC 13018 / CCUG 14551 / JCM 1027 / KCTC 2358 / NCIMB 9240 / NCTC 8049).